A 272-amino-acid chain; its full sequence is MFHMLKIRLIPCIVTKGELVVQSFAFKNYLPIGNVKTAIDFFVNWDVDEIIVNDIDASKEFREPNVDLVSWAAKECFVPLTVGGGIKTLEHIRNLLKAGADKVTINTKAIDDPDFIKNAASVFGSQCITVSVDAIKQGNVYKLYDYRDGRVLDVDVVDWVRKVESYGAGEILLNSVDRDGSREGYDVELLKTVSGIVSIPVIALGGIGRFDQLAEGAIEGGCQALSAANIFQHMEHSTIAAKAQMRNAKLNVRLSSKVKYENFDLDFLGRPY.

The active site involves Asp133.

The protein belongs to the HisA/HisF family. Heterodimer of HisH and HisF.

It localises to the cytoplasm. It catalyses the reaction 5-[(5-phospho-1-deoxy-D-ribulos-1-ylimino)methylamino]-1-(5-phospho-beta-D-ribosyl)imidazole-4-carboxamide + L-glutamine = D-erythro-1-(imidazol-4-yl)glycerol 3-phosphate + 5-amino-1-(5-phospho-beta-D-ribosyl)imidazole-4-carboxamide + L-glutamate + H(+). Its pathway is amino-acid biosynthesis; L-histidine biosynthesis; L-histidine from 5-phospho-alpha-D-ribose 1-diphosphate: step 5/9. IGPS catalyzes the conversion of PRFAR and glutamine to IGP, AICAR and glutamate. The HisF subunit catalyzes the cyclization activity that produces IGP and AICAR from PRFAR using the ammonia provided by the HisH subunit. The polypeptide is Putative imidazole glycerol phosphate synthase subunit hisF2 (hisF2) (Vibrio vulnificus (strain YJ016)).